The primary structure comprises 257 residues: Short chain dehydrogenase helC (257 aa).

The signal sequence occupies residues 1 to 22; it reads MNTAIITGAAQGVGLCIAEALA. V13 lines the NADP(+) pocket. N46 carries N-linked (GlcNAc...) asparagine glycosylation. Residues D60 and N87 each coordinate NADP(+). The N-linked (GlcNAc...) asparagine glycan is linked to N110. NADP(+) is bound by residues Y154, K158, I185, and T187. The Proton acceptor role is filled by Y154. K158 acts as the Lowers pKa of active site Tyr in catalysis.

It belongs to the short-chain dehydrogenases/reductases (SDR) family.

It participates in mycotoxin biosynthesis. In terms of biological role, short chain dehydrogenase; part of the gene cluster that mediates the biosynthesis of helvolic acid, an antibacterial nortriterpenoid. Protostadienol synthase helA cyclizes (3S)-oxidosqualene to (17Z)-protosta-17(20),24-dien-3-beta-ol (protostadienol). The synthesis of protostadienol is followed by several steps of monooxygenation, dehydrogenation, and acyl transfer to yield the final helvolic acid. Following the cyclization to the tetracyclic protostadienol by helA, cytochrome P450 monooxygenases helB1-mediated and helB2-mediated oxidation at C-4 and C-16, acyltransferase helD2-dependent acetylation of 16-OH, oxidation of C-21 by cytochrome P450 monooxygenase helB4, and short chain dehydrogenase helC-dependent oxidative decarboxylation yield the fusidane skeleton. This intermediate is further modified in three additional steps mediated by the cytochrome P450 monooxygenase helB3, the acyltransferase helD1, and the 3-ketosteroid 1-dehydrogenase helE to give helvolic acid. Compared with the late stages in the biosynthesis of helvolic acid, enzymes involved in the early stage modifications act in a relatively strict order. The hydroxylation of C-16 by helB1 and subsequent acetylation by helD2 should occur before the helB3-mediated oxidation of C-21. C-4 demethylation in fusidane-type antibiotics proceeds in an unusual manner though it is also achieved by oxidative decarboxylation. The methyl group at C-4 beta position is oxidized by helB1 and subsequently removed by the short chain dehydrogenase helC. The sequence is that of Short chain dehydrogenase helC from Aspergillus fumigatus (strain ATCC MYA-4609 / CBS 101355 / FGSC A1100 / Af293) (Neosartorya fumigata).